A 407-amino-acid chain; its full sequence is Phosphopentomutase (407 aa).

Positions 10, 306, 311, 347, 348, and 359 each coordinate Mn(2+).

Belongs to the phosphopentomutase family. Requires Mn(2+) as cofactor.

It is found in the cytoplasm. The enzyme catalyses 2-deoxy-alpha-D-ribose 1-phosphate = 2-deoxy-D-ribose 5-phosphate. The catalysed reaction is alpha-D-ribose 1-phosphate = D-ribose 5-phosphate. The protein operates within carbohydrate degradation; 2-deoxy-D-ribose 1-phosphate degradation; D-glyceraldehyde 3-phosphate and acetaldehyde from 2-deoxy-alpha-D-ribose 1-phosphate: step 1/2. Isomerase that catalyzes the conversion of deoxy-ribose 1-phosphate (dRib-1-P) and ribose 1-phosphate (Rib-1-P) to deoxy-ribose 5-phosphate (dRib-5-P) and ribose 5-phosphate (Rib-5-P), respectively. The protein is Phosphopentomutase of Yersinia pseudotuberculosis serotype O:1b (strain IP 31758).